A 135-amino-acid chain; its full sequence is Putative nickel-responsive regulator (135 aa).

The Ni(2+) site is built by His79, His90, His92, and Cys98.

The protein belongs to the transcriptional regulatory CopG/NikR family. Ni(2+) serves as cofactor.

Its function is as follows. Transcriptional regulator. This chain is Putative nickel-responsive regulator, found in Dictyoglomus thermophilum (strain ATCC 35947 / DSM 3960 / H-6-12).